Consider the following 201-residue polypeptide: Orotate phosphoribosyltransferase (201 aa).

5-phospho-alpha-D-ribose 1-diphosphate is bound at residue 113–121; it reads EDIITTGKS. Orotate contacts are provided by T117 and R145.

It belongs to the purine/pyrimidine phosphoribosyltransferase family. PyrE subfamily. Homodimer. Mg(2+) is required as a cofactor.

The catalysed reaction is orotidine 5'-phosphate + diphosphate = orotate + 5-phospho-alpha-D-ribose 1-diphosphate. Its pathway is pyrimidine metabolism; UMP biosynthesis via de novo pathway; UMP from orotate: step 1/2. Functionally, catalyzes the transfer of a ribosyl phosphate group from 5-phosphoribose 1-diphosphate to orotate, leading to the formation of orotidine monophosphate (OMP). The sequence is that of Orotate phosphoribosyltransferase from Helicobacter pylori (strain HPAG1).